An 84-amino-acid chain; its full sequence is ATP synthase subunit c (84 aa).

Helical transmembrane passes span 13 to 33 (IAVG…WGLI) and 56 to 76 (FIFA…GFWF).

Belongs to the ATPase C chain family. In terms of assembly, F-type ATPases have 2 components, F(1) - the catalytic core - and F(0) - the membrane proton channel. F(1) has five subunits: alpha(3), beta(3), gamma(1), delta(1), epsilon(1). F(0) has three main subunits: a(1), b(2) and c(10-14). The alpha and beta chains form an alternating ring which encloses part of the gamma chain. F(1) is attached to F(0) by a central stalk formed by the gamma and epsilon chains, while a peripheral stalk is formed by the delta and b chains.

Its subcellular location is the cell inner membrane. In terms of biological role, f(1)F(0) ATP synthase produces ATP from ADP in the presence of a proton or sodium gradient. F-type ATPases consist of two structural domains, F(1) containing the extramembraneous catalytic core and F(0) containing the membrane proton channel, linked together by a central stalk and a peripheral stalk. During catalysis, ATP synthesis in the catalytic domain of F(1) is coupled via a rotary mechanism of the central stalk subunits to proton translocation. Key component of the F(0) channel; it plays a direct role in translocation across the membrane. A homomeric c-ring of between 10-14 subunits forms the central stalk rotor element with the F(1) delta and epsilon subunits. The protein is ATP synthase subunit c of Acidithiobacillus ferrooxidans (strain ATCC 23270 / DSM 14882 / CIP 104768 / NCIMB 8455) (Ferrobacillus ferrooxidans (strain ATCC 23270)).